The sequence spans 464 residues: Peptidase inhibitor 16 (464 aa).

Positions 1 to 27 (MHGSGSLLACLLPPLLLLGAAPGPAGA) are cleaved as a signal peptide. The SCP domain occupies 37–165 (VELHNLYRTQ…TNIHLLVCNY (129 aa)). Residue asparagine 114 is glycosylated (N-linked (GlcNAc...) asparagine). 4 disordered regions span residues 208-241 (DLSS…TEPP), 260-281 (VETK…TKTP), 304-347 (PATL…LMGT), and 386-412 (TTLK…ANAV). The segment covering 311 to 325 (STHDPIPKSADKEAS) has biased composition (basic and acidic residues). The span at 395–411 (SSKSLSNSPSASATANA) shows a compositional bias: low complexity.

It belongs to the CRISP family. As to quaternary structure, interacts with PSP94/MSMB. In terms of processing, N-glycosylated.

The protein localises to the secreted. May inhibit cardiomyocyte growth. The polypeptide is Peptidase inhibitor 16 (PI16) (Bos taurus (Bovine)).